The following is an 815-amino-acid chain: Lon protease 1 (815 aa).

One can recognise a Lon N-terminal domain in the interval 12–205; that stretch reads VFVLALRDVV…HILKTIETEI (194 aa). Position 358-365 (358-365) interacts with ATP; the sequence is GPPGVGKT. The 182-residue stretch at 594–775 folds into the Lon proteolytic domain; the sequence is TNQIGQVAGL…DEVFKIALES (182 aa). Active-site residues include S681 and K724.

This sequence belongs to the peptidase S16 family. As to quaternary structure, homohexamer. Organized in a ring with a central cavity.

The protein localises to the cytoplasm. It catalyses the reaction Hydrolysis of proteins in presence of ATP.. Functionally, ATP-dependent serine protease that mediates the selective degradation of mutant and abnormal proteins as well as certain short-lived regulatory proteins. Required for cellular homeostasis and for survival from DNA damage and developmental changes induced by stress. Degrades polypeptides processively to yield small peptide fragments that are 5 to 10 amino acids long. Binds to DNA in a double-stranded, site-specific manner. This Hydrogenovibrio crunogenus (strain DSM 25203 / XCL-2) (Thiomicrospira crunogena) protein is Lon protease 1.